Consider the following 1310-residue polypeptide: Major viral transcription factor ICP4 homolog (1310 aa).

Disordered regions lie at residues 117–271, 285–454, and 636–696; these read AGAR…GPVE, GAKA…TPII, and GSSP…SLLD. Residues 341-350 are compositionally biased toward basic and acidic residues; sequence PVEKKPKSRE. Low complexity-rich tracts occupy residues 351-364, 392-407, and 648-666; these read FVSSSSSSSSWGSS, PSPSNSDDSDSNDGGS, and PSPTTPATQTPDPQPSAAA. A Nuclear localization signal motif is present at residues 677–685; that stretch reads RLRTPRKRK. Phosphoserine; by VZV ORF66 is present on residues S686 and S722. Disordered regions lie at residues 1195 to 1258 and 1282 to 1310; these read RFVF…SFGV and ELLSSSSSSEDEDDVWGGRGGRSPPQSRG. The segment covering 1217 to 1227 has biased composition (basic and acidic residues); sequence RTADDREHALE. Residues 1228–1250 are compositionally biased toward acidic residues; that stretch reads PDDWEVGCEDAWDSEEGGGDDGD.

The protein belongs to the herpesviridae ICP4 family. As to quaternary structure, interacts with IE4 and IE63. Interacts with human USF1 and SP1. Phosphorylated by ORF66 protein kinase on Ser-686 and Ser-722. Also phosphorylated by ORF47 protein kinase and by human CSNK2A1/CKII.

Its subcellular location is the host nucleus. It is found in the host cytoplasm. It localises to the virion tegument. Transcriptional transactivator. May interact with and recruit specific components of the general transcription machinery to viral promoters and stabilize their formation for transcription initiation. Negatively regulates its own transcription. This immediate early (EI) protein may be necessary in virion for viral pathogenesis. The sequence is that of Major viral transcription factor ICP4 homolog from Homo sapiens (Human).